The sequence spans 516 residues: GMP synthase [glutamine-hydrolyzing] (516 aa).

A Glutamine amidotransferase type-1 domain is found at 6-198; that stretch reads KVIIVDYGSQ…LFKIAGIKAD (193 aa). Catalysis depends on Cys-83, which acts as the Nucleophile. Active-site residues include His-172 and Glu-174. The 193-residue stretch at 199 to 391 folds into the GMPS ATP-PPase domain; sequence WSMSSFCERV…LGLPDFIVWR (193 aa). 227–233 is a binding site for ATP; sequence SGGIDST.

Homodimer.

It carries out the reaction XMP + L-glutamine + ATP + H2O = GMP + L-glutamate + AMP + diphosphate + 2 H(+). It functions in the pathway purine metabolism; GMP biosynthesis; GMP from XMP (L-Gln route): step 1/1. In terms of biological role, catalyzes the synthesis of GMP from XMP. The sequence is that of GMP synthase [glutamine-hydrolyzing] from Oleidesulfovibrio alaskensis (strain ATCC BAA-1058 / DSM 17464 / G20) (Desulfovibrio alaskensis).